The following is a 316-amino-acid chain: 4-hydroxy-3-methylbut-2-enyl diphosphate reductase (316 aa).

Cys-12 serves as a coordination point for [4Fe-4S] cluster. The (2E)-4-hydroxy-3-methylbut-2-enyl diphosphate site is built by His-41 and His-74. Dimethylallyl diphosphate-binding residues include His-41 and His-74. His-41 and His-74 together coordinate isopentenyl diphosphate. Position 96 (Cys-96) interacts with [4Fe-4S] cluster. His-124 is a binding site for (2E)-4-hydroxy-3-methylbut-2-enyl diphosphate. His-124 contacts dimethylallyl diphosphate. His-124 contributes to the isopentenyl diphosphate binding site. Glu-126 functions as the Proton donor in the catalytic mechanism. Position 167 (Thr-167) interacts with (2E)-4-hydroxy-3-methylbut-2-enyl diphosphate. Cys-197 is a [4Fe-4S] cluster binding site. Positions 225, 226, 227, and 269 each coordinate (2E)-4-hydroxy-3-methylbut-2-enyl diphosphate. Ser-225, Ser-226, Asn-227, and Ser-269 together coordinate dimethylallyl diphosphate. Isopentenyl diphosphate is bound by residues Ser-225, Ser-226, Asn-227, and Ser-269.

It belongs to the IspH family. As to quaternary structure, homodimer. It depends on [4Fe-4S] cluster as a cofactor.

The enzyme catalyses isopentenyl diphosphate + 2 oxidized [2Fe-2S]-[ferredoxin] + H2O = (2E)-4-hydroxy-3-methylbut-2-enyl diphosphate + 2 reduced [2Fe-2S]-[ferredoxin] + 2 H(+). It carries out the reaction dimethylallyl diphosphate + 2 oxidized [2Fe-2S]-[ferredoxin] + H2O = (2E)-4-hydroxy-3-methylbut-2-enyl diphosphate + 2 reduced [2Fe-2S]-[ferredoxin] + 2 H(+). It functions in the pathway isoprenoid biosynthesis; dimethylallyl diphosphate biosynthesis; dimethylallyl diphosphate from (2E)-4-hydroxy-3-methylbutenyl diphosphate: step 1/1. Its pathway is isoprenoid biosynthesis; isopentenyl diphosphate biosynthesis via DXP pathway; isopentenyl diphosphate from 1-deoxy-D-xylulose 5-phosphate: step 6/6. In terms of biological role, catalyzes the conversion of 1-hydroxy-2-methyl-2-(E)-butenyl 4-diphosphate (HMBPP) into a mixture of isopentenyl diphosphate (IPP) and dimethylallyl diphosphate (DMAPP). Acts in the terminal step of the DOXP/MEP pathway for isoprenoid precursor biosynthesis. This chain is 4-hydroxy-3-methylbut-2-enyl diphosphate reductase, found in Escherichia coli O6:H1 (strain CFT073 / ATCC 700928 / UPEC).